The sequence spans 75 residues: Protease B inhibitor 1 (75 aa).

Threonine 74 is modified (phosphothreonine).

It belongs to the protease inhibitor I9 family. In terms of assembly, part of the heterodimeric LMA1 complex together with the thioredoxin II/TRX2. LMA1 binds to the ATPase SEC18.

Its subcellular location is the cytoplasm. The protein localises to the nucleus. Functionally, cytosolic inhibitor of vacuolar proteinase B (yscB), probably regulating protease B activity during limited proteolysis. PBI2 is a component of the LMA1 complex, which is involved in the facilitation of vesicle fusion such as homotypic vacuole and ER-derived COPII vesicle fusion with the Golgi. The chain is Protease B inhibitor 1 (PBI2) from Saccharomyces cerevisiae (Baker's yeast).